A 77-amino-acid polypeptide reads, in one-letter code: Immune protein Tsi2 (77 aa).

Forms a heterotetramer with Tse2 consisting of two Tse2 dimers and two Tsi2 dimers. Formation of the complex inactivates Tse2 enzymatic activity.

In terms of biological role, immunity protein that plays a role in preventing early activation of toxin Tse2. Binds to a large surface of Tse2 and thereby occludes the active site to specifically inhibits Tse2. The protein is Immune protein Tsi2 of Pseudomonas aeruginosa (strain ATCC 15692 / DSM 22644 / CIP 104116 / JCM 14847 / LMG 12228 / 1C / PRS 101 / PAO1).